A 467-amino-acid chain; its full sequence is Cysteine--tRNA ligase (467 aa).

Position 30 (Cys30) interacts with Zn(2+). A 'HIGH' region motif is present at residues 32 to 42; the sequence is PTVYDDSHLGH. 3 residues coordinate Zn(2+): Cys209, His239, and Glu243. Residues 271–275 carry the 'KMSKS' region motif; that stretch reads KMSKS. Position 274 (Lys274) interacts with ATP.

The protein belongs to the class-I aminoacyl-tRNA synthetase family. Monomer. Zn(2+) is required as a cofactor.

The protein localises to the cytoplasm. It catalyses the reaction tRNA(Cys) + L-cysteine + ATP = L-cysteinyl-tRNA(Cys) + AMP + diphosphate. The protein is Cysteine--tRNA ligase of Aliarcobacter butzleri (strain RM4018) (Arcobacter butzleri).